A 235-amino-acid polypeptide reads, in one-letter code: Ion-translocating oxidoreductase complex subunit E (235 aa).

Helical transmembrane passes span 63 to 83, 93 to 113, 117 to 137, 152 to 172, and 206 to 226; these read LGLG…ISLF, IPIY…LMNA, TLYQ…IIIG, IWDG…LGAL, and SFLL…LLAI.

This sequence belongs to the NqrDE/RnfAE family. The complex is composed of six subunits: RnfA, RnfB, RnfC, RnfD, RnfE and RnfG.

It localises to the cell inner membrane. Its function is as follows. Part of a membrane-bound complex that couples electron transfer with translocation of ions across the membrane. This Haemophilus influenzae (strain ATCC 51907 / DSM 11121 / KW20 / Rd) protein is Ion-translocating oxidoreductase complex subunit E.